Reading from the N-terminus, the 82-residue chain is Putative membrane protein insertion efficiency factor (82 aa).

It belongs to the UPF0161 family.

The protein localises to the cell inner membrane. Functionally, could be involved in insertion of integral membrane proteins into the membrane. In Synechococcus elongatus (strain ATCC 33912 / PCC 7942 / FACHB-805) (Anacystis nidulans R2), this protein is Putative membrane protein insertion efficiency factor.